The chain runs to 205 residues: Purine catabolism protein PucB (205 aa).

It participates in purine metabolism; hypoxanthine degradation. Its function is as follows. Required for xanthine dehydrogenase activity. Could be involved in formation of the molybdenum cofactor required by xanthine dehydrogenase. This is Purine catabolism protein PucB (pucB) from Bacillus subtilis (strain 168).